The chain runs to 280 residues: Mevalonyl-coenzyme A hydratase SIDH (280 aa).

The PTS1-type peroxisomal targeting signal signature appears at 278 to 280 (SKL).

This sequence belongs to the enoyl-CoA hydratase/isomerase family.

It localises to the peroxisome. Its pathway is siderophore biosynthesis. Its function is as follows. Mevalonyl-coenzyme A hydratase; part of the gene cluster that mediates the biosynthesis of at least 11 siderophores, including beauverichelin A, dimerumic acid (DA), Na-dimethyl coprogen (NADC), eleutherazine B, ferricrocin (FC), fusarinine A, fusarinine C (FsC), metachelin A, mevalonolactone, rhodotorulic acid (RA) and tenellin. This cocktail of siderophores for iron metabolism is essential for virulence, and more specifically for the fungal virulence in penetrating through the host cuticle. Siderophore synthesis is also involved in conidial germination under iron-deficient conditions. For biosynthesis of fusarinine C, the transacylase SIDF transfers anhydromevalonyl to N(5)-hydroxyornithine. The required anhydromevalonyl-CoA moiety is derived from mevalonate by CoA ligation and dehydration catalyzed by SIDI and sidH respectively. SIDH is not essential for siderophore production, probably due to functional redundancy of this protein family, as there are 15 homologs of SIDH in B.bassiana. The chain is Mevalonyl-coenzyme A hydratase SIDH from Beauveria bassiana (strain ARSEF 2860) (White muscardine disease fungus).